Here is a 62-residue protein sequence, read N- to C-terminus: Large ribosomal subunit protein bL32 (62 aa).

Residues 1–19 (MAVPKRKTSKTRRDKRRAS) show a composition bias toward basic residues. The segment at 1-20 (MAVPKRKTSKTRRDKRRASS) is disordered.

The protein belongs to the bacterial ribosomal protein bL32 family.

This Finegoldia magna (strain ATCC 29328 / DSM 20472 / WAL 2508) (Peptostreptococcus magnus) protein is Large ribosomal subunit protein bL32.